Consider the following 219-residue polypeptide: Protein Ac132 (219 aa).

Residues 1–34 (MSDKTPTKKGGSHAMTLRERGVTKPPKKSEKLQQ) form a disordered region. Basic and acidic residues predominate over residues 16–33 (TLRERGVTKPPKKSEKLQ). An NEBU-like domain region spans residues 103 to 134 (YPMAYFVNTDYKLKLECARIRSDLLYKNKNEV).

Interacts with viral envelope protein E18 and the DNA-binding protein p6.9.

The protein localises to the host cytoplasm. It is found in the host nucleus. It localises to the virion. In terms of biological role, plays an essential role in nucleocapsid entry in host nucleus. May act by binding and stabilizing F-actin in the infected cell, which might attach to nucleocapsids and then push the nucleocapsids into the nucleus. The chain is Protein Ac132 (Ac132) from Autographa californica nuclear polyhedrosis virus (AcMNPV).